Reading from the N-terminus, the 278-residue chain is Tryptophan 2,3-dioxygenase (278 aa).

Substrate is bound by residues 47 to 51 (FIVQH), Tyr-109, and Arg-113. His-236 provides a ligand contact to heme. A substrate-binding site is contributed by Thr-250.

It belongs to the tryptophan 2,3-dioxygenase family. In terms of assembly, homotetramer. Heme serves as cofactor.

The enzyme catalyses L-tryptophan + O2 = N-formyl-L-kynurenine. The protein operates within amino-acid degradation; L-tryptophan degradation via kynurenine pathway; L-kynurenine from L-tryptophan: step 1/2. Its function is as follows. Heme-dependent dioxygenase that catalyzes the oxidative cleavage of the L-tryptophan (L-Trp) pyrrole ring and converts L-tryptophan to N-formyl-L-kynurenine. Catalyzes the oxidative cleavage of the indole moiety. This Ralstonia pickettii (strain 12J) protein is Tryptophan 2,3-dioxygenase.